Here is a 92-residue protein sequence, read N- to C-terminus: Small ribosomal subunit protein uS17 (92 aa).

Belongs to the universal ribosomal protein uS17 family. In terms of assembly, part of the 30S ribosomal subunit.

Functionally, one of the primary rRNA binding proteins, it binds specifically to the 5'-end of 16S ribosomal RNA. The polypeptide is Small ribosomal subunit protein uS17 (Bordetella petrii (strain ATCC BAA-461 / DSM 12804 / CCUG 43448)).